Reading from the N-terminus, the 876-residue chain is Liprin-beta-2 (876 aa).

Positions 101-313 (AASNETYQER…TGLLNQYRKV (213 aa)) form a coiled coil. Phosphoserine occurs at positions 329, 363, and 387. Residues 356-376 (EMPPRCSSPTVGPPPLPQKSL) form a disordered region. 2 disordered regions span residues 425-451 (LPGKLSGATPNGEAAKSPPTICQPDAT) and 470-500 (VVNDLSSTSSGTESGPQSPLTPDGKRNPKGI). Over residues 473–489 (DLSSTSSGTESGPQSPL) the composition is skewed to polar residues. Ser-512 carries the phosphoserine modification. Positions 527–553 (RGGLRATAGPRLSRTRDSKGQKSDANA) are disordered. SAM domains are found at residues 558–622 (WSTE…INTK), 630–693 (LDHI…LHVN), and 718–783 (WSNH…KFNA).

The protein belongs to the liprin family. Liprin-beta subfamily. In terms of assembly, forms homodimers and heterodimers. As to expression, widely expressed.

Its function is as follows. May regulate the disassembly of focal adhesions. Did not bind receptor-like tyrosine phosphatases type 2A. This is Liprin-beta-2 (PPFIBP2) from Homo sapiens (Human).